The following is a 269-amino-acid chain: Bidirectional sugar transporter SWEET1a (269 aa).

The Extracellular portion of the chain corresponds to 1–6 (MEHIAR). A helical membrane pass occupies residues 7 to 27 (FFFGVSGNVIALFLFLSPVVT). One can recognise a MtN3/slv 1 domain in the interval 8-96 (FFGVSGNVIA…IFLIFAVDRR (89 aa)). The Cytoplasmic portion of the chain corresponds to 28 to 42 (FWRIIRKRSTEDFSG). Residues 43 to 63 (VPYNMTLLNCLLSAWYGLPFV) traverse the membrane as a helical segment. Residues 64-72 (SPNNILVST) lie on the Extracellular side of the membrane. A helical transmembrane segment spans residues 73–93 (INGTGSVIEAIYVVIFLIFAV). Residues 94-100 (DRRARLR) lie on the Cytoplasmic side of the membrane. The chain crosses the membrane as a helical span at residues 101-121 (MLGLLSIVVSIFATVVLVSLL). Residues 122–129 (ALHGNARK) are Extracellular-facing. The helical transmembrane segment at 130 to 150 (VFCGLAATIFSICMYASPLSI) threads the bilayer. One can recognise a MtN3/slv 2 domain in the interval 132–215 (CGLAATIFSI…ILYFIYRKNK (84 aa)). The Cytoplasmic portion of the chain corresponds to 151–164 (MRLVIKTKSVEYMP). Residues 165–185 (FLLSLAVFLCGTSWFIYGLLG) form a helical membrane-spanning segment. Over 186 to 189 (RDPF) the chain is Extracellular. The helical transmembrane segment at 190–210 (IIIPNGCGSFLGLVQLILYFI) threads the bilayer. Over 211–269 (YRKNKGPAVPAGKGEAAAAADVEDAKKVAAAVEMADATTTNKAAADTVVGDGKVVASQV) the chain is Cytoplasmic.

It belongs to the SWEET sugar transporter family. Forms homooligomers and/or heterooligomers.

Its subcellular location is the cell membrane. Functionally, mediates both low-affinity uptake and efflux of sugar across the plasma membrane. This chain is Bidirectional sugar transporter SWEET1a, found in Sorghum bicolor (Sorghum).